We begin with the raw amino-acid sequence, 305 residues long: Sulfate adenylyltransferase subunit 2 (305 aa).

Belongs to the PAPS reductase family. CysD subfamily. As to quaternary structure, heterodimer composed of CysD, the smaller subunit, and CysN.

It carries out the reaction sulfate + ATP + H(+) = adenosine 5'-phosphosulfate + diphosphate. It participates in sulfur metabolism; hydrogen sulfide biosynthesis; sulfite from sulfate: step 1/3. With CysN forms the ATP sulfurylase (ATPS) that catalyzes the adenylation of sulfate producing adenosine 5'-phosphosulfate (APS) and diphosphate, the first enzymatic step in sulfur assimilation pathway. APS synthesis involves the formation of a high-energy phosphoric-sulfuric acid anhydride bond driven by GTP hydrolysis by CysN coupled to ATP hydrolysis by CysD. This is Sulfate adenylyltransferase subunit 2 from Pseudomonas fluorescens (strain Pf0-1).